Consider the following 44-residue polypeptide: Protein PsbN (44 aa).

Residues 6–26 (FFYGVFLWCLLISVTGYSIYI) form a helical membrane-spanning segment.

It belongs to the PsbN family.

It localises to the plastid. The protein resides in the chloroplast thylakoid membrane. Functionally, may play a role in photosystem I and II biogenesis. The chain is Protein PsbN from Ostreococcus tauri.